A 309-amino-acid chain; its full sequence is Peptidyl-prolyl cis-trans isomerase 9 (309 aa).

The region spanning phenylalanine 8 to glutamate 173 is the PPIase cyclophilin-type domain. Basic and acidic residues-rich tracts occupy residues asparagine 217–arginine 229, arginine 239–asparagine 265, glutamate 280–arginine 289, and tryptophan 296–valine 309. A disordered region spans residues asparagine 217–valine 309.

Belongs to the cyclophilin-type PPIase family. As to expression, co-expressed with pdi-1 in the syncytial hypodermis.

It catalyses the reaction [protein]-peptidylproline (omega=180) = [protein]-peptidylproline (omega=0). Its function is as follows. PPIases accelerate the folding of proteins. It catalyzes the cis-trans isomerization of proline imidic peptide bonds in oligopeptides. Thought to function as a catalyst in the folding and modification of cuticle collagens. The polypeptide is Peptidyl-prolyl cis-trans isomerase 9 (cyn-9) (Caenorhabditis elegans).